A 493-amino-acid polypeptide reads, in one-letter code: Tripartite motif-containing protein 5 (493 aa).

Ala-2 bears the N-acetylalanine mark. An RING-type zinc finger spans residues 15 to 59; the sequence is CPICLELLTQPLSLDCGHSFCQACLTANHKKSTLDKGERSCPVCR. Ser-86 bears the Phosphoserine mark. A B box-type zinc finger spans residues 90–132; the sequence is QKVDHCARHGEKLLLFCKEDGKVICWLCERSQEHRGHHTFLTE. Zn(2+) is bound by residues Cys-95, His-98, Cys-117, and His-123. Residues 131–223 adopt a coiled-coil conformation; the sequence is TEEVAQKYQV…LTKSETEMVQ (93 aa). A required for interaction with GABARAP and for autophagy region spans residues 185–198; sequence FEQLRDILDWEESN. The region spanning 281-493 is the B30.2/SPRY domain; that stretch reads LKGMLEVFRE…VPMTLCSPSS (213 aa).

Belongs to the TRIM/RBCC family. Can form homodimers and homotrimers. In addition to lower-order dimerization, also exhibits a higher-order multimerization and both low- and high-order multimerizations are essential for its restriction activity. Interacts with BTBD1 and BTBD2. Interacts with PSMC4, PSMC5, PSMD7 and HSPA8/HSC70. Interacts (via B30.2/SPRY domain) with HSPA1A/B. Interacts with PSMC2, MAP3K7/TAK1, TAB2 and TAB3. Interacts with SQSTM1. Interacts with TRIM6 and TRIM34. Interacts with ULK1 (phosphorylated form), GABARAP, GABARAPL1, GABARAPL2, MAP1LC3A, MAP1LC3C and BECN1. In terms of processing, degraded in a proteasome-independent fashion in the absence of viral infection but in a proteasome-dependent fashion following exposure to restriction sensitive virus. Autoubiquitinated in a RING finger- and UBE2D2-dependent manner. Monoubiquitinated by TRIM21. Deubiquitinated by Yersinia YopJ. Ubiquitination may not lead to proteasomal degradation.

It is found in the cytoplasm. It localises to the nucleus. It carries out the reaction S-ubiquitinyl-[E2 ubiquitin-conjugating enzyme]-L-cysteine + [acceptor protein]-L-lysine = [E2 ubiquitin-conjugating enzyme]-L-cysteine + N(6)-ubiquitinyl-[acceptor protein]-L-lysine.. It participates in protein modification; protein ubiquitination. Capsid-specific restriction factor that prevents infection from non-host-adapted retroviruses. Blocks viral replication early in the life cycle, after viral entry but before reverse transcription. In addition to acting as a capsid-specific restriction factor, also acts as a pattern recognition receptor that activates innate immune signaling in response to the retroviral capsid lattice. Binding to the viral capsid triggers its E3 ubiquitin ligase activity, and in concert with the heterodimeric ubiquitin conjugating enzyme complex UBE2V1-UBE2N (also known as UBC13-UEV1A complex) generates 'Lys-63'-linked polyubiquitin chains, which in turn are catalysts in the autophosphorylation of the MAP3K7/TAK1 complex (includes TAK1, TAB2, and TAB3). Activation of the MAP3K7/TAK1 complex by autophosphorylation results in the induction and expression of NF-kappa-B and MAPK-responsive inflammatory genes, thereby leading to an innate immune response in the infected cell. Plays a role in regulating autophagy through activation of autophagy regulator BECN1 by causing its dissociation from its inhibitors BCL2 and TAB2. This Pongo pygmaeus (Bornean orangutan) protein is Tripartite motif-containing protein 5 (TRIM5).